A 586-amino-acid polypeptide reads, in one-letter code: uncharacterized protein (586 aa).

The tract at residues Met1–Asp115 is disordered. Residues Thr8–Glu20 show a composition bias toward basic and acidic residues. Residues Val21–Gly31 show a composition bias toward polar residues. Residues Tyr35–Pro44 show a composition bias toward basic and acidic residues. Polar residues predominate over residues Thr76 to Thr107. WD repeat units follow at residues Gln184–Glu223, Gly253–Val291, Arg293–Trp333, Glu335–Ser374, Cys387–Lys430, and Ser432–Ala474.

It is found in the cytoplasm. The protein localises to the nucleus. This is an uncharacterized protein from Schizosaccharomyces pombe (strain 972 / ATCC 24843) (Fission yeast).